The primary structure comprises 2190 residues: Voltage-dependent L-type calcium channel subunit alpha-1D (2190 aa).

Residues Met1–Glu10 are compositionally biased toward low complexity. Disordered regions lie at residues Met1 to Thr44 and Gln57 to Arg96. At Met1–Lys121 the chain is on the cytoplasmic side. Composition is skewed to polar residues over residues Pro31–Thr44 and Asn63–Ser76. The span at Gln77–Lys88 shows a compositional bias: basic residues. An I repeat occupies Asn108–Phe404. The helical transmembrane segment at Pro122–Val140 threads the bilayer. The Extracellular portion of the chain corresponds to Tyr141–Lys158. A glycan (N-linked (GlcNAc...) asparagine) is linked at Asn150. Residues Val159 to Tyr178 traverse the membrane as a helical segment. Residues Gly179–Asn190 lie on the Cytoplasmic side of the membrane. The chain crosses the membrane as a helical span at residues Gly191–Leu209. Topologically, residues Glu210–Asp230 are extracellular. Residues Val231–Val249 traverse the membrane as a helical segment. The Cytoplasmic portion of the chain corresponds to Pro250 to His268. A helical membrane pass occupies residues Ile269–Phe288. At Ile289–Trp376 the chain is on the extracellular side. Residue Asn324 is glycosylated (N-linked (GlcNAc...) asparagine). Residue Glu359 coordinates Ca(2+). Residues Pro377–Ser401 traverse the membrane as a helical segment. At Gly402–Val544 the chain is on the cytoplasmic side. The segment at Gln424–Glu441 is binding to the beta subunit. Residues Gly478 to Val500 form a disordered region. One copy of the II repeat lies at Asn530–Leu776. A helical membrane pass occupies residues Thr545–Glu564. Over His565–Ala579 the chain is Extracellular. The helical transmembrane segment at Asn580 to Leu598 threads the bilayer. Residues Gly599–Ser606 lie on the Cytoplasmic side of the membrane. Residues Leu607–Leu625 traverse the membrane as a helical segment. Topologically, residues Val626–Gly635 are extracellular. The helical transmembrane segment at Ile636–Trp654 threads the bilayer. At Ala655–Ser673 the chain is on the cytoplasmic side. A helical transmembrane segment spans residues Leu674–Gly694. Over Gly695–Ile748 the chain is Extracellular. Glu726 is a binding site for Ca(2+). A helical membrane pass occupies residues Val749–Val773. Residues Asp774–His907 lie on the Cytoplasmic side of the membrane. Basic and acidic residues predominate over residues Lys787–Lys823. A disordered region spans residues Lys787–Ile869. The span at Val847 to Glu859 shows a compositional bias: acidic residues. The III repeat unit spans residues Asn894–Phe1176. Residues Ile908–Ala926 traverse the membrane as a helical segment. The Extracellular segment spans residues Glu927–Tyr942. The helical transmembrane segment at Ala943–Phe962 threads the bilayer. At Gly963–Asn974 the chain is on the cytoplasmic side. A helical membrane pass occupies residues Tyr975 to Ile993. Topologically, residues Gln994 to Ser999 are extracellular. The helical transmembrane segment at Val1000–Ala1019 threads the bilayer. At Lys1020–Asn1038 the chain is on the cytoplasmic side. Residues Ile1039 to Phe1058 form a helical membrane-spanning segment. The Extracellular portion of the chain corresponds to Lys1059–Glu1148. Positions Arg1096–Asn1186 are dihydropyridine binding. A Ca(2+)-binding site is contributed by Glu1122. A helical transmembrane segment spans residues Ile1149–Val1169. The Cytoplasmic portion of the chain corresponds to Gly1170–Thr1226. The stretch at Asn1213–Phe1496 is one IV repeat. The helical transmembrane segment at Gly1227–Met1245 threads the bilayer. Topologically, residues Gln1246–Ile1260 are extracellular. A helical transmembrane segment spans residues Met1261–Phe1280. Topologically, residues Lys1281–Ser1297 are cytoplasmic. A helical membrane pass occupies residues Asp1298–Glu1319. Residues Ala1320–Ile1342 lie on the Extracellular side of the membrane. A helical transmembrane segment spans residues Ser1343–Gly1362. Over Glu1363–Tyr1381 the chain is Cytoplasmic. A helical membrane pass occupies residues Val1382–Phe1401. The Extracellular portion of the chain corresponds to Gly1402 to Phe1468. Residues Arg1449–Lys1515 form a dihydropyridine binding region. A phenylalkylamine binding region spans residues Glu1461 to Ser1504. The chain crosses the membrane as a helical span at residues Ala1469–Met1493. Topologically, residues Asp1494 to Leu2190 are cytoplasmic. Disordered regions lie at residues Thr1736–Leu1787, Phe1803–Thr1833, His1917–Phe1952, and Ser1995–Tyr2025. Residues Ser1805–Glu1823 show a composition bias toward basic and acidic residues. A compositionally biased stretch (basic residues) spans Lys1824–Thr1833.

It belongs to the calcium channel alpha-1 subunit (TC 1.A.1.11) family. CACNA1D subfamily. Voltage-dependent calcium channels are multisubunit complexes, consisting of alpha-1, alpha-2, beta and delta subunits in a 1:1:1:1 ratio. The channel activity is directed by the pore-forming and voltage-sensitive alpha-1 subunit. In many cases, this subunit is sufficient to generate voltage-sensitive calcium channel activity. The auxiliary subunits beta and alpha-2/delta linked by a disulfide bridge regulate the channel activity. Interacts with RIMBP2. Expressed in the basilar papilla of the cochlea.

Its subcellular location is the membrane. It carries out the reaction Ca(2+)(in) = Ca(2+)(out). In terms of biological role, the isoform alpha-1D gives rise to L-type calcium currents. Long-lasting (L-type) calcium channels belong to the 'high-voltage activated' (HVA) group. In Gallus gallus (Chicken), this protein is Voltage-dependent L-type calcium channel subunit alpha-1D (CACNA1D).